Reading from the N-terminus, the 297-residue chain is Putative F-box protein At2g19630 (297 aa).

In terms of domain architecture, F-box spans 11-60; the sequence is TKNSLQIPIDLIIEIFLRLSVNSIARCRCVSKQWASTLSRPYFTELFLTR.

This Arabidopsis thaliana (Mouse-ear cress) protein is Putative F-box protein At2g19630.